The following is a 161-amino-acid chain: Insulin-like growth factor 1, juvenile form (161 aa).

A b region spans residues 45 to 73 (GPETLCGAELVDTLQFVCGDRGFYFSKPT). 3 cysteine pairs are disulfide-bonded: Cys-50-Cys-92, Cys-62-Cys-105, and Cys-91-Cys-96. Residues 74–85 (GYGPSSRRSHNR) form a c region. Positions 86-106 (GIVDECCFQSCELRRLEMYCA) are a. The interval 107–114 (PVKPGKTP) is d. The segment at 111-161 (GKTPRSVRAQRHTDSPRTAKKPLPGQSHSSYKEVHQKNSSRGNTGGRNYRI) is disordered. Positions 115–161 (RSVRAQRHTDSPRTAKKPLPGQSHSSYKEVHQKNSSRGNTGGRNYRI) are cleaved as a propeptide — e peptide.

The protein belongs to the insulin family.

The protein resides in the secreted. The insulin-like growth factors, isolated from plasma, are structurally and functionally related to insulin but have a much higher growth-promoting activity. Acts as a ligand for IGF1R. Binds to the alpha subunit of IGF1R, leading to the activation of the intrinsic tyrosine kinase activity which autophosphorylates tyrosine residues in the beta subunit thus initiatiating a cascade of down-stream signaling events leading to activation of the PI3K-AKT/PKB and the Ras-MAPK pathways. Binds to integrins. Its binding to integrins and subsequent ternary complex formation with integrins and IGFR1 are essential for IGF1 signaling. This Cyprinus carpio (Common carp) protein is Insulin-like growth factor 1, juvenile form.